The primary structure comprises 295 residues: Probable alpha-L-glutamate ligase (295 aa).

Residues 104 to 287 form the ATP-grasp domain; that stretch reads HQLLAAQGID…VAAAIVQHLE (184 aa). ATP is bound by residues K141, 178–179, D187, and 211–213; these read EF and RSN. 3 residues coordinate Mg(2+): D248, E260, and N262. The Mn(2+) site is built by D248, E260, and N262.

This sequence belongs to the RimK family. The cofactor is Mg(2+). Requires Mn(2+) as cofactor.

In Xanthomonas euvesicatoria pv. vesicatoria (strain 85-10) (Xanthomonas campestris pv. vesicatoria), this protein is Probable alpha-L-glutamate ligase.